Here is a 269-residue protein sequence, read N- to C-terminus: Eukaryotic translation initiation factor 3 subunit G-1 (269 aa).

In terms of domain architecture, RRM spans 188–266; that stretch reads AAIRISNLSE…LILSVEWSKP (79 aa).

The protein belongs to the eIF-3 subunit G family. Component of the eukaryotic translation initiation factor 3 (eIF-3) complex. The eIF-3 complex interacts with pix.

It is found in the cytoplasm. In terms of biological role, RNA-binding component of the eukaryotic translation initiation factor 3 (eIF-3) complex, which is involved in protein synthesis of a specialized repertoire of mRNAs and, together with other initiation factors, stimulates binding of mRNA and methionyl-tRNAi to the 40S ribosome. The eIF-3 complex specifically targets and initiates translation of a subset of mRNAs involved in cell proliferation. This subunit can bind 18S rRNA. The polypeptide is Eukaryotic translation initiation factor 3 subunit G-1 (Drosophila virilis (Fruit fly)).